The following is a 428-amino-acid chain: Homoserine dehydrogenase (428 aa).

NADPH contacts are provided by phenylalanine 10, threonine 12, valine 13, arginine 44, and lysine 106. Valine 13 is a binding site for NAD(+). Positions 13, 44, and 106 each coordinate NADP(+). Na(+) is bound by residues glutamate 130, valine 133, glycine 135, and isoleucine 137. Residues glycine 188 and glutamate 191 each contribute to the NADP(+) site. L-homoserine is bound by residues glutamate 191 and aspartate 202. Lysine 206 functions as the Proton donor in the catalytic mechanism. An NADPH-binding site is contributed by glycine 303. Residue glycine 303 participates in NAD(+) binding. NADP(+) is bound at residue glycine 303. The ACT domain maps to 351–425; the sequence is YFSVETPDST…DFKLLNYFKV (75 aa).

It belongs to the homoserine dehydrogenase family. It depends on a metal cation as a cofactor.

It catalyses the reaction L-homoserine + NADP(+) = L-aspartate 4-semialdehyde + NADPH + H(+). It carries out the reaction L-homoserine + NAD(+) = L-aspartate 4-semialdehyde + NADH + H(+). It participates in amino-acid biosynthesis; L-methionine biosynthesis via de novo pathway; L-homoserine from L-aspartate: step 3/3. The protein operates within amino-acid biosynthesis; L-threonine biosynthesis; L-threonine from L-aspartate: step 3/5. Functionally, catalyzes the conversion of L-aspartate-beta-semialdehyde (L-Asa) to L-homoserine (L-Hse), the third step in the biosynthesis of threonine and methionine from aspartate. This is Homoserine dehydrogenase (hom) from Lactococcus lactis subsp. lactis (strain IL1403) (Streptococcus lactis).